Consider the following 219-residue polypeptide: NAD(P)H-quinone oxidoreductase subunit K 2 (219 aa).

Positions 53, 54, 118, and 149 each coordinate [4Fe-4S] cluster.

The protein belongs to the complex I 20 kDa subunit family. In terms of assembly, NDH-1 can be composed of about 15 different subunits; different subcomplexes with different compositions have been identified which probably have different functions. [4Fe-4S] cluster serves as cofactor.

It localises to the cellular thylakoid membrane. It catalyses the reaction a plastoquinone + NADH + (n+1) H(+)(in) = a plastoquinol + NAD(+) + n H(+)(out). The enzyme catalyses a plastoquinone + NADPH + (n+1) H(+)(in) = a plastoquinol + NADP(+) + n H(+)(out). Its function is as follows. NDH-1 shuttles electrons from an unknown electron donor, via FMN and iron-sulfur (Fe-S) centers, to quinones in the respiratory and/or the photosynthetic chain. The immediate electron acceptor for the enzyme in this species is believed to be plastoquinone. Couples the redox reaction to proton translocation, and thus conserves the redox energy in a proton gradient. Cyanobacterial NDH-1 also plays a role in inorganic carbon-concentration. This Synechocystis sp. (strain ATCC 27184 / PCC 6803 / Kazusa) protein is NAD(P)H-quinone oxidoreductase subunit K 2.